The sequence spans 326 residues: tRNA-modifying protein YgfZ (326 aa).

2 residues coordinate folate: W27 and W189.

Belongs to the tRNA-modifying YgfZ family.

The protein resides in the cytoplasm. Folate-binding protein involved in regulating the level of ATP-DnaA and in the modification of some tRNAs. It is probably a key factor in regulatory networks that act via tRNA modification, such as initiation of chromosomal replication. This chain is tRNA-modifying protein YgfZ, found in Escherichia coli O45:K1 (strain S88 / ExPEC).